The sequence spans 114 residues: Protein ELF4-LIKE 4 (114 aa).

Residues 87-114 (SVDASSEGESSGTLKSDGKANQKRFRSG) are disordered. Over residues 89 to 100 (DASSEGESSGTL) the composition is skewed to polar residues.

This sequence belongs to the EARLY FLOWERING 4 family. Homodimer.

The protein resides in the nucleus. In terms of biological role, component of the central CCA1/LHY-TOC1 feedback loop in the circadian clock that promotes clock accuracy and is required for sustained rhythms in the absence of daily light/dark cycles. The sequence is that of Protein ELF4-LIKE 4 (EFL4) from Arabidopsis thaliana (Mouse-ear cress).